The sequence spans 210 residues: Somatotropin (210 aa).

The N-terminal stretch at 1–22 (MGQVFLLMPVLLVSCFLSQGAA) is a signal peptide. His38 is a Zn(2+) binding site. The cysteines at positions 71 and 183 are disulfide-linked. Glu192 is a Zn(2+) binding site. Cys200 and Cys208 are joined by a disulfide.

The protein belongs to the somatotropin/prolactin family.

It is found in the secreted. Functionally, growth hormone plays an important role in growth control and is involved in the regulation of several anabolic processes. Implicated as an osmoregulatory substance important for seawater adaptation. This is Somatotropin (gh) from Oncorhynchus keta (Chum salmon).